Reading from the N-terminus, the 254-residue chain is Probable transcriptional regulatory protein HDEF_0869 (254 aa).

Positions 1 to 20 (MAGHSKWANTKHRKAAQDAK) are disordered.

This sequence belongs to the TACO1 family.

It localises to the cytoplasm. This chain is Probable transcriptional regulatory protein HDEF_0869, found in Hamiltonella defensa subsp. Acyrthosiphon pisum (strain 5AT).